A 954-amino-acid polypeptide reads, in one-letter code: Mycolic acid-containing lipids exporter MmpL11 (954 aa).

12 helical membrane-spanning segments follow: residues 11–31, 188–208, 214–234, 235–255, 279–299, 312–334, 373–393, 529–549, 559–579, 597–617, 648–668, and 670–690; these read FRWA…YLAL, IVLI…LPLV, VVVT…SVFV, TSTV…FILM, GLAV…IYLI, ILAV…ATFG, AIAA…MVLG, TQPL…LVSI, VLMT…VFQW, IPPL…IFLL, AALI…PLVA, and LGVA…LVLV.

Its subcellular location is the cell inner membrane. In terms of biological role, contributes to cell wall biosynthesis and biofilm formation. Transports the mycolic acid-containing lipids monomeromycolyl diacylglycerol (MMDAG) and mycolate ester wax (WE) to the bacterial surface. The sequence is that of Mycolic acid-containing lipids exporter MmpL11 from Mycolicibacterium smegmatis (strain ATCC 700084 / mc(2)155) (Mycobacterium smegmatis).